The sequence spans 224 residues: Cytidylate kinase (224 aa).

11-19 lines the ATP pocket; that stretch reads GPAAAGKST.

Belongs to the cytidylate kinase family. Type 1 subfamily.

Its subcellular location is the cytoplasm. It carries out the reaction CMP + ATP = CDP + ADP. The catalysed reaction is dCMP + ATP = dCDP + ADP. The protein is Cytidylate kinase (cmk) of Bacillus subtilis (strain 168).